The primary structure comprises 205 residues: Protein Nef (205 aa).

A lipid anchor (N-myristoyl glycine; by host) is attached at G2. The residue at position 6 (S6) is a Phosphoserine; by host. Residues 62 to 65 (DNEE) form an acidic; interacts with host PACS1 and PACS2; stabilizes the interaction of NEF/MHC-I with host AP1M1; necessary for MHC-I internalization region. The segment at 69-78 (PVRPQVPTRP) is SH3-binding; interaction with Src family tyrosine kinases. The short motif at 72 to 75 (PQVP) is the PxxP; stabilizes the interaction of NEF/MHC-I with host AP1M1; necessary for MHC-I internalization element. Positions 108–124 (EILDLWVYHTQGFFPDW) are mediates dimerization, Nef-PTE1 interaction. The segment at 148–180 (LTEEQVEQANEGDNNCLLHPICQHGMEDEDKEV) is binding to ATP6V1H. A Dileucine internalization motif; necessary for CD4 internalization motif is present at residues 164 to 165 (LL). A Diacidic; necessary for CD4 internalization motif is present at residues 174 to 175 (ED).

It belongs to the lentivirus primate group Nef protein family. As to quaternary structure, monomer; cytosolic form. Homodimer; membrane bound form. Interacts with Nef associated p21-activated kinase (PAK2); this interaction activates PAK2. Associates with the Nef-MHC-I-AP1 complex; this complex is required for MHC-I internalization. Interacts (via C-terminus) with host PI3-kinase. Interacts with host PACS1; this interaction seems to be weak. Interacts with host PACS2. Interacts with host LCK and MAPK3; these interactions inhibit the kinase activity of the latter. Interacts with host ATP6V1H; this interaction may play a role in CD4 endocytosis. Associates with the CD4-Nef-AP2 complex; this complex is required for CD4 internalization. Interacts with host AP2 subunit alpha and AP2 subunit sigma2. Interacts with TCR-zeta chain; this interaction up-regulates the Fas ligand (FasL) surface expression. Interacts with host HCK, LYN, and SRC; these interactions activate the Src family kinases. Interacts with MAP3K5; this interaction inhibits the Fas and TNFR-mediated death signals. Interacts with beta-COP and PTE1. Interacts with human RACK1; this increases Nef phosphorylation by PKC. Interacts with TP53; this interaction decreases the half-life of TP53, protecting the infected cell against p53-mediated apoptosis. Post-translationally, the virion-associated Nef proteins are cleaved by the viral protease to release the soluble C-terminal core protein. Nef is probably cleaved concomitantly with viral structural proteins on maturation of virus particles. Myristoylated. In terms of processing, phosphorylated on serine residues, probably by host PKCdelta and theta.

Its subcellular location is the host cell membrane. The protein resides in the virion. It localises to the secreted. It is found in the host Golgi apparatus membrane. Its function is as follows. Factor of infectivity and pathogenicity, required for optimal virus replication. Alters numerous pathways of T-lymphocyte function and down-regulates immunity surface molecules in order to evade host defense and increase viral infectivity. Alters the functionality of other immunity cells, like dendritic cells, monocytes/macrophages and NK cells. In terms of biological role, in infected CD4(+) T-lymphocytes, down-regulates the surface MHC-I, mature MHC-II, CD4, CD28, CCR5 and CXCR4 molecules. Mediates internalization and degradation of host CD4 through the interaction of with the cytoplasmic tail of CD4, the recruitment of AP-2 (clathrin adapter protein complex 2), internalization through clathrin coated pits, and subsequent transport to endosomes and lysosomes for degradation. Diverts host MHC-I molecules to the trans-Golgi network-associated endosomal compartments by an endocytic pathway to finally target them for degradation. MHC-I down-regulation may involve AP-1 (clathrin adapter protein complex 1) or possibly Src family kinase-ZAP70/Syk-PI3K cascade recruited by PACS2. In consequence infected cells are masked for immune recognition by cytotoxic T-lymphocytes. Decreasing the number of immune receptors also prevents reinfection by more HIV particles (superinfection). Down-regulates host SERINC3 and SERINC5 thereby excluding these proteins from the viral particles. Virion infectivity is drastically higher when SERINC3 or SERINC5 are excluded from the viral envelope, because these host antiviral proteins impair the membrane fusion event necessary for subsequent virion penetration. Bypasses host T-cell signaling by inducing a transcriptional program nearly identical to that of anti-CD3 cell activation. Interaction with TCR-zeta chain up-regulates the Fas ligand (FasL). Increasing surface FasL molecules and decreasing surface MHC-I molecules on infected CD4(+) cells send attacking cytotoxic CD8+ T-lymphocytes into apoptosis. Functionally, plays a role in optimizing the host cell environment for viral replication without causing cell death by apoptosis. Protects the infected cells from apoptosis in order to keep them alive until the next virus generation is ready to strike. Inhibits the Fas and TNFR-mediated death signals by blocking MAP3K5/ASK1. Decreases the half-life of TP53, protecting the infected cell against p53-mediated apoptosis. Inhibits the apoptotic signals regulated by the Bcl-2 family proteins through the formation of a Nef/PI3-kinase/PAK2 complex that leads to activation of PAK2 and induces phosphorylation of host BAD. Its function is as follows. Extracellular Nef protein targets CD4(+) T-lymphocytes for apoptosis by interacting with CXCR4 surface receptors. The protein is Protein Nef of Simian immunodeficiency virus (isolate CPZ GAB1) (SIV-cpz).